Consider the following 419-residue polypeptide: UDP-N-acetylglucosamine 1-carboxyvinyltransferase (419 aa).

22–23 lines the phosphoenolpyruvate pocket; it reads KN. Position 92 (arginine 92) interacts with UDP-N-acetyl-alpha-D-glucosamine. The active-site Proton donor is the cysteine 116. Cysteine 116 carries the post-translational modification 2-(S-cysteinyl)pyruvic acid O-phosphothioketal. Residues aspartate 306 and isoleucine 328 each coordinate UDP-N-acetyl-alpha-D-glucosamine.

This sequence belongs to the EPSP synthase family. MurA subfamily.

It localises to the cytoplasm. It carries out the reaction phosphoenolpyruvate + UDP-N-acetyl-alpha-D-glucosamine = UDP-N-acetyl-3-O-(1-carboxyvinyl)-alpha-D-glucosamine + phosphate. The protein operates within cell wall biogenesis; peptidoglycan biosynthesis. Functionally, cell wall formation. Adds enolpyruvyl to UDP-N-acetylglucosamine. This chain is UDP-N-acetylglucosamine 1-carboxyvinyltransferase, found in Psychromonas ingrahamii (strain DSM 17664 / CCUG 51855 / 37).